Reading from the N-terminus, the 93-residue chain is Alpha-defensin 5 (93 aa).

Residues 1–19 (MKTFVLLSALVLLAFQVQA) form the signal peptide. The propeptide occupies 20-58 (DPIHKTDEETNTEEQPGEEDQAVSISFGGQEGSALHEEL). Cystine bridges form between C64-C92, C66-C81, and C71-C91.

It belongs to the alpha-defensin family.

The protein resides in the secreted. In terms of biological role, probably contributes to the antimicrobial barrier function of the small bowel mucosa. The protein is Alpha-defensin 5 (Defa5) of Mus musculus (Mouse).